The following is a 227-amino-acid chain: 7-cyano-7-deazaguanine synthase (227 aa).

8–18 provides a ligand contact to ATP; the sequence is FSGGQDSTTCL. Residues C187, C196, C199, and C202 each coordinate Zn(2+).

It belongs to the QueC family. Zn(2+) serves as cofactor.

The enzyme catalyses 7-carboxy-7-deazaguanine + NH4(+) + ATP = 7-cyano-7-deazaguanine + ADP + phosphate + H2O + H(+). The protein operates within purine metabolism; 7-cyano-7-deazaguanine biosynthesis. In terms of biological role, catalyzes the ATP-dependent conversion of 7-carboxy-7-deazaguanine (CDG) to 7-cyano-7-deazaguanine (preQ(0)). This is 7-cyano-7-deazaguanine synthase from Aliivibrio fischeri (strain ATCC 700601 / ES114) (Vibrio fischeri).